Reading from the N-terminus, the 460-residue chain is MGKEKTHVNLVVIGHVDAGKSTTTGHLIYKCGGIDKRTIEKFEKEADELGKGSFKYAWVLDKLKAERERGITIDIALWKFQTPKYYVTVIDAPGHRDFIKNMITGTSQADCAILIIAGGVGEFEAGISKDGQTREHALLAFTLGVKQLIVAINKMDSVKWSQDRYNEICKETANFVKKVGYNPKSVPFVPISGWNGDNMIEASTNCDWYKGWTKETKAGEVKGKTLLEAIDAIEPPVRPSDKPLRLPLQDVYKIGGIGTVPVGRVETGVIKAGMVVTFAPANVTTEVKSVEMHHEILPDGGFPGDNVGFNVKNVSVKDIRRGNVAGDSKNDPPKGCDSFNAQVIVLNHPGQIGAGYAPVLDCHTAHIACKFDTLIEKIDRRTGKKMEDSPKFIKSGDAAIVKMVPSKPMCVEAFTEYPPLGRFAVRDMRQTVAVGVIKSVEKSDKAGGKVTKAAQKAAKK.

Position 2 is a n,N,N-trimethylglycine (G2). The residue at position 3 (K3) is an N6,N6-dimethyllysine; alternate. K3 is subject to N6-methyllysine; alternate. Residues 5–240 form the tr-type G domain; sequence KTHVNLVVIG…DAIEPPVRPS (236 aa). Positions 14–21 are G1; sequence GHVDAGKS. 14–21 contacts GTP; sequence GHVDAGKS. K30 carries the N6-methyllysine modification. The interval 70-74 is G2; it reads GITID. Position 79 is an N6,N6,N6-trimethyllysine (K79). The G3 stretch occupies residues 91–94; it reads DAPG. Residues 91 to 95 and 153 to 156 contribute to the GTP site; these read DAPGH and NKMD. The interval 153 to 156 is G4; the sequence is NKMD. The interval 192 to 194 is G5; the sequence is SGW. K317 is modified (N6,N6-dimethyllysine; alternate). At K317 the chain carries N6-methyllysine; alternate. K391 bears the N6-methyllysine mark.

This sequence belongs to the TRAFAC class translation factor GTPase superfamily. Classic translation factor GTPase family. EF-Tu/EF-1A subfamily.

It localises to the cytoplasm. Functionally, this protein promotes the GTP-dependent binding of aminoacyl-tRNA to the A-site of ribosomes during protein biosynthesis. The chain is Elongation factor 1-alpha (TEF) from Yarrowia lipolytica (strain CLIB 122 / E 150) (Yeast).